The following is a 276-amino-acid chain: Small ribosomal subunit protein uS2 (276 aa).

The interval 254–276 (LAGATAAAPAEGAVATETTPTEG) is disordered. Over residues 255 to 276 (AGATAAAPAEGAVATETTPTEG) the composition is skewed to low complexity.

It belongs to the universal ribosomal protein uS2 family.

This Mycobacterium ulcerans (strain Agy99) protein is Small ribosomal subunit protein uS2.